Consider the following 1007-residue polypeptide: Ephrin type-A receptor 10 (1007 aa).

The signal sequence occupies residues 1–22; sequence METGAGPHPLRLFVCLIPLCLA. At 23-565 the chain is on the extracellular side; sequence LLLGPGRPGT…APGSRDQSPA (543 aa). The 182-residue stretch at 35–216 folds into the Eph LBD domain; it reads EVILLDSKAS…YYKQCRATVR (182 aa). Asn311 carries an N-linked (GlcNAc...) asparagine glycan. Disordered stretches follow at residues 323–343 and 467–486; these read ARSPTDPPSASCTRPPSAPRD and PQSVSLSWREPVPAGAPGTN. 2 Fibronectin type-III domains span residues 340 to 452 and 456 to 554; these read APRD…TGPG and EEDE…TPGE. An N-linked (GlcNAc...) asparagine glycan is attached at Asn486. Residues 566–586 traverse the membrane as a helical segment; it reads VVVTVVTISALLVLGSVMSVL. The Cytoplasmic segment spans residues 587 to 1007; it reads AIWRRPCDGK…LQLQGQGVQV (421 aa). Residues 644–899 enclose the Protein kinase domain; the sequence is VTLEKSLGAG…PRFSQIHSIL (256 aa). Positions 932 to 996 constitute an SAM domain; it reads PSFGSVGAWL…LSGISALQTR (65 aa).

It belongs to the protein kinase superfamily. Tyr protein kinase family. Ephrin receptor subfamily. In terms of tissue distribution, expressed in the cochlea, in the organ of Corti, spiral ganglion, and stria vascularis.

It localises to the cell membrane. It carries out the reaction L-tyrosyl-[protein] + ATP = O-phospho-L-tyrosyl-[protein] + ADP + H(+). In terms of biological role, receptor for members of the ephrin-A family. Binds to EFNA3, EFNA4 and EFNA5. The chain is Ephrin type-A receptor 10 (Epha10) from Mus musculus (Mouse).